The chain runs to 525 residues: GMP synthase [glutamine-hydrolyzing] (525 aa).

In terms of domain architecture, Glutamine amidotransferase type-1 spans 9-207; it reads RILILDFGSQ…VVDICKCEKL (199 aa). Cys86 (nucleophile) is an active-site residue. Catalysis depends on residues His181 and Glu183. Residues 208 to 400 form the GMPS ATP-PPase domain; the sequence is WTSASIIDDA…LGLPYDMLYR (193 aa). 235-241 contacts ATP; sequence SGGVDSS.

Homodimer.

The catalysed reaction is XMP + L-glutamine + ATP + H2O = GMP + L-glutamate + AMP + diphosphate + 2 H(+). The protein operates within purine metabolism; GMP biosynthesis; GMP from XMP (L-Gln route): step 1/1. In terms of biological role, catalyzes the synthesis of GMP from XMP. In Colwellia psychrerythraea (strain 34H / ATCC BAA-681) (Vibrio psychroerythus), this protein is GMP synthase [glutamine-hydrolyzing].